The sequence spans 124 residues: TP53-target gene 3 protein (124 aa).

Residues 1-11 (MRASPCISQPA) are compositionally biased toward polar residues. The tract at residues 1 to 42 (MRASPCISQPAASWHPRPSALRPTAGSGPDTRTPGTVEDGSA) is disordered.

As to expression, strongly expressed in testis. Weakly expressed in heart, placenta and skeletal muscle.

The protein localises to the cytoplasm. It localises to the nucleus. Its function is as follows. May play a significant role in p53/TP53-mediating signaling pathway. This Homo sapiens (Human) protein is TP53-target gene 3 protein.